The following is a 632-amino-acid chain: MGKVIGIDLGTTNSCVAVMDGKAPKVIENAEGMRTTPSIVAFSDDGERLVGQPAKRQAVTNPERTFFAVKRLVGRRYDDPMVEKDKKLVPYKIVKASNGDAWVEADAKTYSPSQVSAFILQKMKETAEAHLGAKVDQAVITVPAYFNDAQRQATKDAGKIAGLEVLRIINEPTAAALAYGLDKAKAGVIAVYDLGGGTFDVSILEIGDGVFEVKSTNGDTFLGGEDFDMRLVSYLADEFQKEQGINLRNDKLALQRLKEAAEKAKIELSSTTQTEINLPFITADQSGPKHLTMKLTRAKFEALVDDLVQKTIEPCRKALKDAGLTAGEIGEVVLVGGMTRMPKVQEVVKQLFGKEPHKGVNPDEVVAIGAAIQAGVLQGDVKDVLLLDVTPLSLGIETLGGVFTRIIERNTTIPTKKSQVFSTAEDNQNAVTIRVFQGEREMAADNKILGQFDLMGIPPSPRGMPQIEVTFDIDANGIVNVSARDKATGKEQQIRIQASGGLSEADINKMVKDAEINAAEDKKRREAVDAKNHADALVHTTEKALAEHGAKVEEGERRAIEDALGDLREALKGDDAEAIKAKSNTLAQASMKLGEAMYKQQAEADAAKDAAKDDVVDAEFTEVDDDKPKKSA.

Thr198 carries the post-translational modification Phosphothreonine; by autocatalysis.

Belongs to the heat shock protein 70 family.

Functionally, acts as a chaperone. The polypeptide is Chaperone protein DnaK (Rhodopseudomonas palustris (strain BisB18)).